The chain runs to 127 residues: Holotricin-2 (127 aa).

The N-terminal stretch at Met-1 to Ala-15 is a signal peptide. Residues Ala-16 to Arg-55 constitute a propeptide that is removed on maturation. A disordered region spans residues Pro-43–Arg-84. The span at Glu-45 to Ser-56 shows a compositional bias: basic and acidic residues. The span at Gln-70–Arg-84 shows a compositional bias: polar residues.

Belongs to the coleoptericin family. As to expression, hemolymph.

The protein resides in the secreted. In terms of biological role, antibacterial activity against Gram-negative bacteria but not against Gram-positive bacteria. The protein is Holotricin-2 of Holotrichia diomphalia (Korean black chafer).